Here is a 178-residue protein sequence, read N- to C-terminus: Cytochrome b6-f complex iron-sulfur subunit (178 aa).

Residues 20 to 42 (LLTFGTATGVALGALYPVANYFM) traverse the membrane as a helical segment. The region spanning 65–161 (KTGWLATHQA…VDIEDDAVLV (97 aa)) is the Rieske domain. Residues C107, H109, C125, and H128 each coordinate [2Fe-2S] cluster. An intrachain disulfide couples C112 to C127.

Belongs to the Rieske iron-sulfur protein family. In terms of assembly, the 4 large subunits of the cytochrome b6-f complex are cytochrome b6, subunit IV (17 kDa polypeptide, PetD), cytochrome f and the Rieske protein, while the 4 small subunits are PetG, PetL, PetM and PetN. The complex functions as a dimer. The cofactor is [2Fe-2S] cluster.

It localises to the cellular thylakoid membrane. It catalyses the reaction 2 oxidized [plastocyanin] + a plastoquinol + 2 H(+)(in) = 2 reduced [plastocyanin] + a plastoquinone + 4 H(+)(out). Functionally, component of the cytochrome b6-f complex, which mediates electron transfer between photosystem II (PSII) and photosystem I (PSI), cyclic electron flow around PSI, and state transitions. This Prochlorococcus marinus (strain MIT 9312) protein is Cytochrome b6-f complex iron-sulfur subunit.